A 447-amino-acid chain; its full sequence is Probable glycine dehydrogenase (decarboxylating) subunit 1 (447 aa).

The protein belongs to the GcvP family. N-terminal subunit subfamily. The glycine cleavage system is composed of four proteins: P, T, L and H. In this organism, the P 'protein' is a heterodimer of two subunits.

The enzyme catalyses N(6)-[(R)-lipoyl]-L-lysyl-[glycine-cleavage complex H protein] + glycine + H(+) = N(6)-[(R)-S(8)-aminomethyldihydrolipoyl]-L-lysyl-[glycine-cleavage complex H protein] + CO2. Its function is as follows. The glycine cleavage system catalyzes the degradation of glycine. The P protein binds the alpha-amino group of glycine through its pyridoxal phosphate cofactor; CO(2) is released and the remaining methylamine moiety is then transferred to the lipoamide cofactor of the H protein. The polypeptide is Probable glycine dehydrogenase (decarboxylating) subunit 1 (Metallosphaera sedula (strain ATCC 51363 / DSM 5348 / JCM 9185 / NBRC 15509 / TH2)).